The primary structure comprises 249 residues: Probable transcriptional regulatory protein ACIAD2052 (249 aa).

This sequence belongs to the TACO1 family.

It localises to the cytoplasm. The chain is Probable transcriptional regulatory protein ACIAD2052 from Acinetobacter baylyi (strain ATCC 33305 / BD413 / ADP1).